A 236-amino-acid chain; its full sequence is Uridylate kinase (236 aa).

Position 12-15 (12-15 (KLSG)) interacts with ATP. The tract at residues 20 to 25 (GEKGFG) is involved in allosteric activation by GTP. Gly-54 is a UMP binding site. ATP-binding residues include Gly-55 and Arg-59. UMP contacts are provided by residues Asp-72 and 133 to 140 (TGNPYFST). ATP contacts are provided by Asn-161, Tyr-166, and Asp-169.

The protein belongs to the UMP kinase family. In terms of assembly, homohexamer.

It localises to the cytoplasm. It catalyses the reaction UMP + ATP = UDP + ADP. The protein operates within pyrimidine metabolism; CTP biosynthesis via de novo pathway; UDP from UMP (UMPK route): step 1/1. Its activity is regulated as follows. Allosterically activated by GTP. Inhibited by UTP. Functionally, catalyzes the reversible phosphorylation of UMP to UDP. The sequence is that of Uridylate kinase from Alkaliphilus metalliredigens (strain QYMF).